A 592-amino-acid chain; its full sequence is Autophagy-related protein 22-1 (592 aa).

The next 4 membrane-spanning stretches (helical) occupy residues 31-51, 108-128, 143-163, and 167-187; these read YGWA…PITL, TASF…VIII, LLIV…VVVP, and LLGG…FVLL. An N-linked (GlcNAc...) asparagine glycan is attached at N213. 8 consecutive transmembrane segments (helical) span residues 271–291, 301–321, 364–384, 398–418, 433–453, 468–490, 502–524, and 534–554; these read IGIG…VVVV, LVLF…SLWL, IVIF…VSGT, AALG…AFSW, IIAC…GFIP, MYPL…RSFF, FYAL…VGAI, and AFVF…LVDV. Positions 572–592 are disordered; it reads PQGSEYGAISDDQTTEDPIEE.

This sequence belongs to the ATG22 family.

The protein resides in the vacuole membrane. In terms of biological role, vacuolar effluxer which mediate the efflux of amino acids resulting from autophagic degradation. The release of autophagic amino acids allows the maintenance of protein synthesis and viability during nitrogen starvation. This chain is Autophagy-related protein 22-1 (atg22-1), found in Penicillium rubens (strain ATCC 28089 / DSM 1075 / NRRL 1951 / Wisconsin 54-1255) (Penicillium chrysogenum).